The following is a 332-amino-acid chain: GTP 3',8-cyclase (332 aa).

The 226-residue stretch at 9 to 234 (TFGRRISYLR…DSDHRTGGPS (226 aa)) folds into the Radical SAM core domain. Arginine 18 contributes to the GTP binding site. [4Fe-4S] cluster contacts are provided by cysteine 25 and cysteine 29. Tyrosine 31 serves as a coordination point for S-adenosyl-L-methionine. Cysteine 32 is a binding site for [4Fe-4S] cluster. Residue arginine 67 participates in GTP binding. Residue glycine 71 participates in S-adenosyl-L-methionine binding. Residue threonine 100 participates in GTP binding. Position 124 (serine 124) interacts with S-adenosyl-L-methionine. Lysine 160 contacts GTP. Methionine 194 is an S-adenosyl-L-methionine binding site. [4Fe-4S] cluster is bound by residues cysteine 257 and cysteine 260. Residue 262–264 (RVR) participates in GTP binding. Residue cysteine 274 coordinates [4Fe-4S] cluster.

Belongs to the radical SAM superfamily. MoaA family. As to quaternary structure, monomer and homodimer. It depends on [4Fe-4S] cluster as a cofactor.

It catalyses the reaction GTP + AH2 + S-adenosyl-L-methionine = (8S)-3',8-cyclo-7,8-dihydroguanosine 5'-triphosphate + 5'-deoxyadenosine + L-methionine + A + H(+). Its pathway is cofactor biosynthesis; molybdopterin biosynthesis. In terms of biological role, catalyzes the cyclization of GTP to (8S)-3',8-cyclo-7,8-dihydroguanosine 5'-triphosphate. The sequence is that of GTP 3',8-cyclase from Erythrobacter litoralis (strain HTCC2594).